Here is a 488-residue protein sequence, read N- to C-terminus: MGIAHTEWESVIGLEVHVELNTESKLFSPARNHFGDEPNTNISPVCTGMPGSLPVLNKDAVRKAVLFGCAVEGDVALFSRFDRKSYFYPDSPRNFQITQYEHPIVRGGCIRAVVEGEEKTFELAQTHLEDDAGMLKHFGDFAGVDYNRAGVPLIEIVSKPCMFSAEDAVAYANALVSILGYIGISDCNMEEGSIRFDVNISVRPRGSRELRNKVEIKNMNSFTFMAQALEAEKRRQIEEYLSHPNEDPKKVVPAATYRWDPEKKKTVLMRLKERAEDYMYFVEPDLPVLQITETYIDEVRQTLPELPHSKYMRYITDFDIAEDLAMILVGDRHTAHFFETATMSCKNYRALSNWITVEFAGRCKAKGKTLPFTGILPEWVAQLVNFIDRGVITGKIAKEIADRMVSSFGESPEDILRRHPSLLPMTDDHALRAIVKEVVAQNTASVADYKNGKAKALGFLVGQIMKRTEGKAPPKRVNELLLAAMRDM.

This sequence belongs to the GatB/GatE family. GatB subfamily. Heterotrimer of A, B and C subunits.

It carries out the reaction L-glutamyl-tRNA(Gln) + L-glutamine + ATP + H2O = L-glutaminyl-tRNA(Gln) + L-glutamate + ADP + phosphate + H(+). It catalyses the reaction L-aspartyl-tRNA(Asn) + L-glutamine + ATP + H2O = L-asparaginyl-tRNA(Asn) + L-glutamate + ADP + phosphate + 2 H(+). In terms of biological role, allows the formation of correctly charged Asn-tRNA(Asn) or Gln-tRNA(Gln) through the transamidation of misacylated Asp-tRNA(Asn) or Glu-tRNA(Gln) in organisms which lack either or both of asparaginyl-tRNA or glutaminyl-tRNA synthetases. The reaction takes place in the presence of glutamine and ATP through an activated phospho-Asp-tRNA(Asn) or phospho-Glu-tRNA(Gln). The sequence is that of Aspartyl/glutamyl-tRNA(Asn/Gln) amidotransferase subunit B from Chlamydia trachomatis serovar L2 (strain ATCC VR-902B / DSM 19102 / 434/Bu).